Reading from the N-terminus, the 500-residue chain is Lysine--tRNA ligase (500 aa).

E410 and E417 together coordinate Mg(2+).

The protein belongs to the class-II aminoacyl-tRNA synthetase family. Homodimer. Requires Mg(2+) as cofactor.

The protein resides in the cytoplasm. It carries out the reaction tRNA(Lys) + L-lysine + ATP = L-lysyl-tRNA(Lys) + AMP + diphosphate. The protein is Lysine--tRNA ligase of Shewanella sediminis (strain HAW-EB3).